A 707-amino-acid polypeptide reads, in one-letter code: Caprin-1 (707 aa).

Composition is skewed to low complexity over residues 1-15 and 22-43; these read MPSA…SKSS and GSSG…PATG. Residues 1–48 form a disordered region; the sequence is MPSATSHSGSGSKSSGPPPPSGSSGSEAAAGAAAPASQHPATGTGAVQ. P2 carries the post-translational modification N-acetylproline. Phosphoserine is present on S10. A coiled-coil region spans residues 58-92; the sequence is VIDKKLRNLEKKKGKLDDYQERMNKGERLNQDQLD. S113 is subject to Phosphoserine. Residues 123 to 151 adopt a coiled-coil conformation; it reads KTIKKTARREQLMREEAEQKRLKTVLELQ. Position 163 is an omega-N-methylarginine (R163). The segment covering 325–335 has biased composition (low complexity); that stretch reads LQQQPQAASPS. A disordered region spans residues 325 to 347; sequence LQQQPQAASPSVPEPHSLTPVAQ. Phosphoserine is present on residues S333 and S341. A G3BP1-binding region spans residues 358 to 379; it reads QDLMAQMQGPYNFIQDSMLDFE. Disordered stretches follow at residues 412-496, 526-558, and 570-707; these read ESRL…AGTS, PANE…EQTE, and TYHG…QQVN. Polar residues predominate over residues 431–452; sequence PLVSSTSEGYTASQPLYQPSHA. The segment covering 453-462 has biased composition (basic and acidic residues); the sequence is TEQRPQKEPM. The span at 465–474 shows a compositional bias: polar residues; it reads IQATISLNTD. A compositionally biased stretch (low complexity) spans 475 to 489; the sequence is QTTASSSLPAASQPQ. Composition is skewed to polar residues over residues 533-552 and 572-603; these read LKQQ…SQPH and HGSQ…QPYY. A Phosphotyrosine modification is found at Y623. 2 positions are modified to omega-N-methylarginine: R624 and R631. A phosphotyrosine mark is found at Y634 and Y637. R638 carries the omega-N-methylarginine modification. Residues 640–655 show a composition bias toward polar residues; it reads SFSNTPNSGYSQSQFT. S642 and S647 each carry an O-linked (GlcNAc) serine glycan. Residues Y649, Y660, Y663, and Y668 each carry the phosphotyrosine modification. 2 stretches are compositionally biased toward low complexity: residues 674–684 and 695–707; these read RGSGQSGPRGA and NRGM…QQVN. R696 is modified (asymmetric dimethylarginine; alternate). R696 carries the post-translational modification Omega-N-methylarginine; alternate.

Belongs to the caprin family. May form homomultimers. Interacts with G3BP1; interaction is direct and promotes stress granule formation. Interacts with G3BP2; interaction is direct and promotes stress granule formation. Interacts with PQBP1. Interacts with DDX3X. Interacts (when phosphorylated by EPHA4) with FMR1; interaction with FMR1 promotes formation of a membraneless compartment. Tyrosine phosphorylation by EPHA4 promotes interaction with FMR1 and liquid-liquid phase separation (LLPS) for the formation of a membraneless compartment that concentrates mRNAs with associated regulatory factors. In terms of processing, O-glycosylated (O-GlcNAcylated), in a cell cycle-dependent manner. O-glycosylation by OGT inhibit ability to undergo liquid-liquid phase separation (LLPS). As to expression, highest expression in thymus, spleen and brain (at protein level). Lower levels in kidney, muscle and liver (at protein level).

It is found in the cytoplasm. Its subcellular location is the cytoplasmic ribonucleoprotein granule. The protein localises to the cytosol. The protein resides in the cell projection. It localises to the dendrite. It is found in the lamellipodium. Its activity is regulated as follows. Ability to mediate liquid-liquid phase separation is regulated by ATP: moderate concentrations of ATP enhance phase separation, whereas high concentrations of ATP lead to inhibition of phase separation. MRNA-binding protein that acts as a regulator of mRNAs transport, translation and/or stability, and which is involved in neurogenesis, synaptic plasticity in neurons and cell proliferation and migration in multiple cell types. Plays an essential role in cytoplasmic stress granule formation. Acts as an mRNA regulator by mediating formation of some phase-separated membraneless compartment: undergoes liquid-liquid phase separation upon binding to target mRNAs, leading to assemble mRNAs into cytoplasmic ribonucleoprotein granules that concentrate mRNAs with associated regulatory factors. Undergoes liquid-liquid phase separation following phosphorylation and interaction with FMR1, promoting formation of cytoplasmic ribonucleoprotein granules that concentrate mRNAs with factors that inhibit translation and mediate deadenylation of target mRNAs. In these cytoplasmic ribonucleoprotein granules, CAPRIN1 mediates recruitment of CNOT7 deadenylase, leading to mRNA deadenylation and degradation. Binds directly and selectively to MYC and CCND2 mRNAs. In neuronal cells, directly binds to several mRNAs associated with RNA granules, including BDNF, CAMK2A, CREB1, MAP2, NTRK2 mRNAs, as well as to GRIN1 and KPNB1 mRNAs, but not to rRNAs. In Mus musculus (Mouse), this protein is Caprin-1 (Caprin1).